Reading from the N-terminus, the 492-residue chain is JmjC domain-containing histone demethylation protein 1 (492 aa).

A PHD-type; atypical zinc finger spans residues 4-72 (PNICQHCQLK…SYRCPNHKEG (69 aa)). Residues 254 to 409 (TAVRQNDLVD…THLKIVEIEK (156 aa)) form the JmjC domain. Thr302 serves as a coordination point for substrate. The Fe cation site is built by His305 and Asp307. Residue Lys322 coordinates substrate. His377 is a binding site for Fe cation.

This sequence belongs to the JHDM1 histone demethylase family. It depends on Fe(2+) as a cofactor.

It is found in the nucleus. It carries out the reaction N(6),N(6)-dimethyl-L-lysyl(36)-[histone H3] + 2 2-oxoglutarate + 2 O2 = L-lysyl(36)-[histone H3] + 2 formaldehyde + 2 succinate + 2 CO2. Histone demethylase that specifically demethylates 'Lys-36' of histone H3, thereby playing a central role in histone code. Does not demethylate H3 'Lys-4' nor 'Lys-79'. The chain is JmjC domain-containing histone demethylation protein 1 (JHD1) from Saccharomyces cerevisiae (strain ATCC 204508 / S288c) (Baker's yeast).